The chain runs to 1292 residues: DNA-directed RNA polymerase subunit beta' (1292 aa).

Positions 70, 72, 85, and 88 each coordinate Zn(2+). Mg(2+)-binding residues include Asp532, Asp534, and Asp536. Residues Cys911, Cys987, Cys994, and Cys997 each coordinate Zn(2+).

Belongs to the RNA polymerase beta' chain family. The RNAP catalytic core consists of 2 alpha, 1 beta, 1 beta' and 1 omega subunit. When a sigma factor is associated with the core the holoenzyme is formed, which can initiate transcription. Requires Mg(2+) as cofactor. Zn(2+) is required as a cofactor.

The enzyme catalyses RNA(n) + a ribonucleoside 5'-triphosphate = RNA(n+1) + diphosphate. In terms of biological role, DNA-dependent RNA polymerase catalyzes the transcription of DNA into RNA using the four ribonucleoside triphosphates as substrates. The polypeptide is DNA-directed RNA polymerase subunit beta' (Mycoplasma genitalium (strain ATCC 33530 / DSM 19775 / NCTC 10195 / G37) (Mycoplasmoides genitalium)).